We begin with the raw amino-acid sequence, 619 residues long: Zinc finger protein 668 (619 aa).

The residue at position 1 (methionine 1) is an N-acetylmethionine. The residue at position 10 (serine 10) is a Phosphoserine. A C2H2-type 1 zinc finger spans residues 22 to 44 (YKCLSCTKTFPNAPRAARHAATH). Residues 34–79 (APRAARHAATHGPADCSEEVAEVKPKPETEAKAEEASGEKVSGSAA) form a disordered region. Residues 54–71 (AEVKPKPETEAKAEEASG) are compositionally biased toward basic and acidic residues. Residues lysine 57, lysine 59, lysine 65, and lysine 80 each participate in a glycyl lysine isopeptide (Lys-Gly) (interchain with G-Cter in SUMO2) cross-link. C2H2-type zinc fingers lie at residues 84-106 (YACP…GRSH), 112-134 (FPCP…LASH), 140-162 (FRCA…QRGH), 168-190 (YACA…RRTH), 196-218 (YSCE…ERSH), 224-246 (FLCS…QRIH), 252-274 (YRCP…ERTH), 280-302 (FLCP…QRAH), 308-330 (YHCE…RRVH), 336-358 (FKCL…ALVH), and 364-386 (FRCE…SRVH). A Glycyl lysine isopeptide (Lys-Gly) (interchain with G-Cter in SUMO2) cross-link involves residue lysine 154. Serine 387 is modified (phosphoserine). The C2H2-type 13 zinc-finger motif lies at 392-414 (FHCNACGKSFVVSSSLRKHERTH). Positions 492-513 (REAPGPLEGAGEAGGEEADEKP) are disordered. A Glycyl lysine isopeptide (Lys-Gly) (interchain with G-Cter in SUMO2) cross-link involves residue lysine 512. C2H2-type zinc fingers lie at residues 516 to 538 (FVCR…ERSH), 544 to 566 (FPCT…SRTH), and 572 to 594 (YTCP…ERTH).

Belongs to the krueppel C2H2-type zinc-finger protein family.

It is found in the nucleus. In terms of biological role, may be involved in transcriptional regulation. May play a role in DNA repair process. This chain is Zinc finger protein 668 (ZNF668), found in Homo sapiens (Human).